Consider the following 242-residue polypeptide: UPF0073 membrane protein Rv1085c (242 aa).

A run of 7 helical transmembrane segments spans residues 42–62 (VYSA…SWAV), 67–87 (AGLT…VSAT), 108–128 (SMIF…ALPA), 133–153 (VVLS…MCWP), 159–179 (VGVP…ATIL), 186–206 (ALVL…LYAV), and 222–242 (FHAC…FVVF).

It belongs to the UPF0073 (Hly-III) family.

The protein localises to the cell membrane. This chain is UPF0073 membrane protein Rv1085c, found in Mycobacterium tuberculosis (strain ATCC 25618 / H37Rv).